A 506-amino-acid polypeptide reads, in one-letter code: Deoxyguanosinetriphosphate triphosphohydrolase (506 aa).

Positions 66-274 (RLTHSLEVQQ…MEAADDISYC (209 aa)) constitute an HD domain.

The protein belongs to the dGTPase family. Type 1 subfamily. As to quaternary structure, homotetramer. It depends on Mg(2+) as a cofactor.

It catalyses the reaction dGTP + H2O = 2'-deoxyguanosine + triphosphate + H(+). Functionally, dGTPase preferentially hydrolyzes dGTP over the other canonical NTPs. The polypeptide is Deoxyguanosinetriphosphate triphosphohydrolase (Yersinia pseudotuberculosis serotype O:3 (strain YPIII)).